An 874-amino-acid polypeptide reads, in one-letter code: Probable inorganic carbon transporter subunit DabA (874 aa).

Zn(2+)-binding residues include Cys398, Asp400, His580, and Cys595.

Belongs to the inorganic carbon transporter (TC 9.A.2) DabA family. As to quaternary structure, forms a complex with DabB. The cofactor is Zn(2+).

It is found in the cell membrane. Part of an energy-coupled inorganic carbon pump. The polypeptide is Probable inorganic carbon transporter subunit DabA (Bacillus cereus (strain ATCC 10987 / NRS 248)).